Here is a 500-residue protein sequence, read N- to C-terminus: Prostacyclin synthase (500 aa).

A helical membrane pass occupies residues 1 to 20 (MSWAVVFGLLAALLLLLLLT). Residues Arg-106, Leu-112, Asn-287, 358-359 (TR), and Arg-382 contribute to the substrate site. Cys-441 contributes to the heme binding site.

It belongs to the cytochrome P450 family. It depends on heme as a cofactor.

The protein localises to the endoplasmic reticulum membrane. It carries out the reaction prostaglandin H2 = prostaglandin I2. It catalyses the reaction a hydroperoxyeicosatetraenoate = an oxoeicosatetraenoate + H2O. The catalysed reaction is (15S)-hydroperoxy-(5Z,8Z,11Z,13E)-eicosatetraenoate = 15-oxo-(5Z,8Z,11Z,13E)-eicosatetraenoate + H2O. The enzyme catalyses (15S)-hydroperoxy-(5Z,8Z,11Z,13E)-eicosatetraenoate + AH2 = (15S)-hydroxy-(5Z,8Z,11Z,13E)-eicosatetraenoate + A + H2O. Functionally, catalyzes the biosynthesis and metabolism of eicosanoids. Catalyzes the isomerization of prostaglandin H2 to prostacyclin (= prostaglandin I2), a potent mediator of vasodilation and inhibitor of platelet aggregation. Additionally, displays dehydratase activity, toward hydroperoxyeicosatetraenoates (HPETEs), especially toward (15S)-hydroperoxy-(5Z,8Z,11Z,13E)-eicosatetraenoate (15(S)-HPETE). The sequence is that of Prostacyclin synthase (PTGIS) from Bos taurus (Bovine).